The chain runs to 408 residues: Arginine biosynthesis bifunctional protein ArgJ (408 aa).

Thr156, Lys182, Thr193, Glu279, Asn403, and Ser408 together coordinate substrate. Thr193 acts as the Nucleophile in catalysis.

The protein belongs to the ArgJ family. Heterotetramer of two alpha and two beta chains.

It localises to the cytoplasm. The catalysed reaction is N(2)-acetyl-L-ornithine + L-glutamate = N-acetyl-L-glutamate + L-ornithine. It catalyses the reaction L-glutamate + acetyl-CoA = N-acetyl-L-glutamate + CoA + H(+). The protein operates within amino-acid biosynthesis; L-arginine biosynthesis; L-ornithine and N-acetyl-L-glutamate from L-glutamate and N(2)-acetyl-L-ornithine (cyclic): step 1/1. Its pathway is amino-acid biosynthesis; L-arginine biosynthesis; N(2)-acetyl-L-ornithine from L-glutamate: step 1/4. Its function is as follows. Catalyzes two activities which are involved in the cyclic version of arginine biosynthesis: the synthesis of N-acetylglutamate from glutamate and acetyl-CoA as the acetyl donor, and of ornithine by transacetylation between N(2)-acetylornithine and glutamate. The sequence is that of Arginine biosynthesis bifunctional protein ArgJ from Bordetella pertussis (strain Tohama I / ATCC BAA-589 / NCTC 13251).